Reading from the N-terminus, the 214-residue chain is Pyridoxine/pyridoxamine 5'-phosphate oxidase (214 aa).

Residues 8–11 (RINY) and K66 contribute to the substrate site. FMN contacts are provided by residues 61-66 (RIVLIK), 76-77 (FT), R82, K83, and Q105. Substrate-binding residues include Y123, R127, and S131. Residues 140–141 (QS) and W184 each bind FMN. Residue 190–192 (RLH) participates in substrate binding. Position 194 (R194) interacts with FMN.

Belongs to the pyridoxamine 5'-phosphate oxidase family. Homodimer. Requires FMN as cofactor.

It catalyses the reaction pyridoxamine 5'-phosphate + O2 + H2O = pyridoxal 5'-phosphate + H2O2 + NH4(+). The catalysed reaction is pyridoxine 5'-phosphate + O2 = pyridoxal 5'-phosphate + H2O2. It functions in the pathway cofactor metabolism; pyridoxal 5'-phosphate salvage; pyridoxal 5'-phosphate from pyridoxamine 5'-phosphate: step 1/1. It participates in cofactor metabolism; pyridoxal 5'-phosphate salvage; pyridoxal 5'-phosphate from pyridoxine 5'-phosphate: step 1/1. Its function is as follows. Catalyzes the oxidation of either pyridoxine 5'-phosphate (PNP) or pyridoxamine 5'-phosphate (PMP) into pyridoxal 5'-phosphate (PLP). In Burkholderia ambifaria (strain ATCC BAA-244 / DSM 16087 / CCUG 44356 / LMG 19182 / AMMD) (Burkholderia cepacia (strain AMMD)), this protein is Pyridoxine/pyridoxamine 5'-phosphate oxidase.